A 652-amino-acid polypeptide reads, in one-letter code: Phosphatidylinositol-binding clathrin assembly protein (652 aa).

Serine 2 is subject to N-acetylserine. An ENTH domain is found at 14-145 (QHSVTGSAVS…VSYRQVAFDF (132 aa)). Residues serine 16 and serine 20 each carry the phosphoserine modification. The interaction with PIMREG stretch occupies residues 221–294 (KYFDMKKNQC…LEGKKIKDST (74 aa)). A Glycyl lysine isopeptide (Lys-Gly) (interchain with G-Cter in SUMO2) cross-link involves residue lysine 238. 2 positions are modified to phosphoserine: serine 303 and serine 315. The segment at 559–580 (KNDVNWSQPGEKKLTGGSNWQP) is disordered.

This sequence belongs to the PICALM/SNAP91 family. Binds to clathrin; involves primarily the C-terminal sequences, but the full-length protein is required for full binding capacity. Binds phosphatidylinositol 4,5- bisphosphate. Interacts with PIMREG; this interaction may change the subcellular location into the nucleus. Interacts with AP2A1 (via its alpha-appendage domain). Interacts (via N-terminus) with VAMP2; VAMP3; VAMP7 and VAMP8 (Via N-terminus). Interacts with LC3/MAP1LC3A. In terms of tissue distribution, expressed in all tissues examined.

Its subcellular location is the cell membrane. It localises to the membrane. The protein resides in the clathrin-coated pit. The protein localises to the golgi apparatus. It is found in the cytoplasmic vesicle. Its subcellular location is the clathrin-coated vesicle. It localises to the nucleus. Cytoplasmic adapter protein that plays a critical role in clathrin-mediated endocytosis which is important in processes such as internalization of cell receptors, synaptic transmission or removal of apoptotic cells. Recruits AP-2 and attaches clathrin triskelions to the cytoplasmic side of plasma membrane leading to clathrin-coated vesicles (CCVs) assembly. Furthermore, regulates clathrin-coated vesicle size and maturation by directly sensing and driving membrane curvature. In addition to binding to clathrin, mediates the endocytosis of small R-SNARES (Soluble NSF Attachment Protein REceptors) between plasma membranes and endosomes including VAMP2, VAMP3, VAMP4, VAMP7 or VAMP8. In turn, PICALM-dependent SNARE endocytosis is required for the formation and maturation of autophagic precursors. Modulates thereby autophagy and the turnover of autophagy substrates such as MAPT/TAU or amyloid precursor protein cleaved C-terminal fragment (APP-CTF). The chain is Phosphatidylinositol-binding clathrin assembly protein (PICALM) from Homo sapiens (Human).